The primary structure comprises 347 residues: D-alanine--D-alanine ligase (347 aa).

The 203-residue stretch at 131–333 (KRVLESAGIA…YPELIERLVD (203 aa)) folds into the ATP-grasp domain. Residue 161–216 (EEKLAYPVFTKPSNMGSSVGISKSENQEELRQALKLAFRYDSRVLVEQGVNAREIE) coordinates ATP. Mg(2+)-binding residues include Asp287, Glu300, and Asn302.

This sequence belongs to the D-alanine--D-alanine ligase family. Requires Mg(2+) as cofactor. Mn(2+) is required as a cofactor.

It is found in the cytoplasm. The enzyme catalyses 2 D-alanine + ATP = D-alanyl-D-alanine + ADP + phosphate + H(+). It participates in cell wall biogenesis; peptidoglycan biosynthesis. Functionally, cell wall formation. The protein is D-alanine--D-alanine ligase of Streptococcus pneumoniae (strain JJA).